The chain runs to 338 residues: Phosphatidylinositol:ceramide inositolphosphotransferase (338 aa).

Topologically, residues 1 to 36 (MTSHVTAHDVGGNEDIGTDHVPWYKQPLPLCTQVMR) are cytoplasmic. Residues 37 to 57 (FILLLLLTVMFLGVAILVANA) traverse the membrane as a helical segment. The Extracellular portion of the chain corresponds to 58–87 (RMPDPEKVRPLPDLLLESIPKVALLENGTN). The helical transmembrane segment at 88-108 (VIIFLLNATTVVVGFKVFLLE) threads the bilayer. The Cytoplasmic portion of the chain corresponds to 109-116 (RHMNGLPR). A helical transmembrane segment spans residues 117–137 (VTFLVGVPKIGSFLNRMAFGV). At 138–152 (LDSGRRPFPLKNVFP) the chain is on the extracellular side. A helical transmembrane segment spans residues 153–173 (IMAIRFLTSYAVVMVFRAFVI). Residues 174–189 (MGTSYPATDNHCQNPQ) lie on the Cytoplasmic side of the membrane. A helical membrane pass occupies residues 190 to 210 (VIEHPVLNVILTLVTLGSGAI). Residues 211 to 222 (HCGDLMFSGHTM) lie on the Extracellular side of the membrane. His-220 is an active-site residue. The helical transmembrane segment at 223–243 (ILSLAFILAWDYSPFLHPWAV) threads the bilayer. Over 244 to 338 (RVWVSVLLPI…TDASAALPEH (95 aa)) the chain is Cytoplasmic. Active-site residues include His-264 and Asp-268.

The protein belongs to the sphingomyelin synthase family.

The protein resides in the membrane. Functionally, bidirectional lipid inositolphosphotransferase capable of converting phosphatidylinositol (PI) and ceramide to inositol-phosphorylceramide (IPC) and diacylglycerol (DAG) and vice versa. Direction is dependent on the relative concentrations of DAG and ceramide as phosphoinositol acceptors. Essential for viability of the pathogenic bloodstream stage of this human protozoan parasite and, consequently, can be considered as potential drug target. This is Phosphatidylinositol:ceramide inositolphosphotransferase from Leishmania major.